We begin with the raw amino-acid sequence, 638 residues long: Chaperone protein DnaK (638 aa).

Position 200 is a phosphothreonine; by autocatalysis (threonine 200). The segment at 598 to 621 (SLHMAATAEQQSGSTGAGAGASAK) is disordered.

This sequence belongs to the heat shock protein 70 family.

In terms of biological role, acts as a chaperone. This is Chaperone protein DnaK from Xylella fastidiosa (strain M23).